The primary structure comprises 145 residues: Group IID secretory phospholipase A2 (145 aa).

Positions 1–20 (MELALLCGLVVMAGVIPIQG) are cleaved as a signal peptide. 7 cysteine pairs are disulfide-bonded: Cys-46/Cys-138, Cys-48/Cys-64, Cys-63/Cys-118, Cys-69/Cys-145, Cys-70/Cys-111, Cys-79/Cys-104, and Cys-97/Cys-109. 3 residues coordinate Ca(2+): His-47, Gly-49, and Gly-51. His-67 is an active-site residue. Asp-68 is a Ca(2+) binding site. Asn-89 is a glycosylation site (N-linked (GlcNAc...) asparagine). Residue Asp-112 is part of the active site.

Belongs to the phospholipase A2 family. Requires Ca(2+) as cofactor. As to expression, highly expressed in pancreas and spleen and less abundantly in colon, thymus, placenta, small intestine, and prostate.

It is found in the secreted. The catalysed reaction is a 1,2-diacyl-sn-glycero-3-phosphoethanolamine + H2O = a 1-acyl-sn-glycero-3-phosphoethanolamine + a fatty acid + H(+). It catalyses the reaction 1-hexadecanoyl-2-(9Z-octadecenoyl)-sn-glycero-3-phosphoethanolamine + H2O = 1-hexadecanoyl-sn-glycero-3-phosphoethanolamine + (9Z)-octadecenoate + H(+). It carries out the reaction 1-hexadecanoyl-2-(9Z,12Z-octadecadienoyl)-sn-glycero-3-phosphoethanolamine + H2O = 1-hexadecanoyl-sn-glycero-3-phosphoethanolamine + (9Z,12Z)-octadecadienoate + H(+). The enzyme catalyses 1,2-dihexadecanoyl-sn-glycero-3-phospho-(1'-sn-glycerol) + H2O = 1-hexadecanoyl-sn-glycero-3-phospho-(1'-sn-glycerol) + hexadecanoate + H(+). The catalysed reaction is 1-hexadecanoyl-2-(9Z-octadecenoyl)-sn-glycero-3-phospho-(1'-sn-glycerol) + H2O = 1-hexadecanoyl-sn-glycero-3-phospho-(1'-sn-glycerol) + (9Z)-octadecenoate + H(+). It catalyses the reaction a 1,2-diacyl-sn-glycero-3-phosphocholine + H2O = a 1-acyl-sn-glycero-3-phosphocholine + a fatty acid + H(+). It carries out the reaction 1,2-dihexadecanoyl-sn-glycero-3-phosphocholine + H2O = 1-hexadecanoyl-sn-glycero-3-phosphocholine + hexadecanoate + H(+). The enzyme catalyses 1-hexadecanoyl-2-(9Z-octadecenoyl)-sn-glycero-3-phosphocholine + H2O = 1-hexadecanoyl-sn-glycero-3-phosphocholine + (9Z)-octadecenoate + H(+). The catalysed reaction is 1-hexadecanoyl-2-(9Z,12Z-octadecadienoyl)-sn-glycero-3-phosphocholine + H2O = (9Z,12Z)-octadecadienoate + 1-hexadecanoyl-sn-glycero-3-phosphocholine + H(+). It catalyses the reaction 1-hexadecanoyl-2-(4Z,7Z,10Z,13Z,16Z,19Z-docosahexaenoyl)-sn-glycero-3-phosphocholine + H2O = (4Z,7Z,10Z,13Z,16Z,19Z)-docosahexaenoate + 1-hexadecanoyl-sn-glycero-3-phosphocholine + H(+). Functionally, secretory calcium-dependent phospholipase A2 that primarily targets extracellular lipids, exerting anti-inflammatory and immunosuppressive functions. Hydrolyzes the ester bond of the fatty acyl group attached at sn-2 position of phospholipids (phospholipase A2 activity) with preference for phosphatidylethanolamines and phosphatidylglycerols over phosphatidylcholines. In draining lymph nodes, selectively hydrolyzes diacyl and alkenyl forms of phosphatidylethanolamines, releasing omega-3 polyunsaturated fatty acids (PUFAs) such as eicosapentaenoate and docosahexaenoate that are precursors of the anti-inflammatory lipid mediators, resolvins. During the resolution phase of acute inflammation drives docosahexaenoate-derived resolvin D1 synthesis, which suppresses dendritic cell activation and T-helper 1 immune response. May act in an autocrine and paracrine manner. Via a mechanism independent of its catalytic activity, promotes differentiation of regulatory T cells (Tregs) and participates in the maintenance of immune tolerance. May contribute to lipid remodeling of cellular membranes and generation of lipid mediators involved in pathogen clearance. Displays bactericidal activity against Gram-positive bacteria by directly hydrolyzing phospholipids of the bacterial membrane. In Homo sapiens (Human), this protein is Group IID secretory phospholipase A2 (PLA2G2D).